The following is a 372-amino-acid chain: Queuine tRNA-ribosyltransferase (372 aa).

The Proton acceptor role is filled by aspartate 90. Residues 90–94 (DSGGF), aspartate 144, glutamine 193, and glycine 220 contribute to the substrate site. Positions 251-257 (GVGTPED) are RNA binding. Aspartate 270 serves as the catalytic Nucleophile. The tract at residues 275–279 (TRNAR) is RNA binding; important for wobble base 34 recognition. The Zn(2+) site is built by cysteine 308, cysteine 310, cysteine 313, and histidine 339.

The protein belongs to the queuine tRNA-ribosyltransferase family. In terms of assembly, homodimer. Within each dimer, one monomer is responsible for RNA recognition and catalysis, while the other monomer binds to the replacement base PreQ1. Zn(2+) serves as cofactor.

The catalysed reaction is 7-aminomethyl-7-carbaguanine + guanosine(34) in tRNA = 7-aminomethyl-7-carbaguanosine(34) in tRNA + guanine. It functions in the pathway tRNA modification; tRNA-queuosine biosynthesis. Catalyzes the base-exchange of a guanine (G) residue with the queuine precursor 7-aminomethyl-7-deazaguanine (PreQ1) at position 34 (anticodon wobble position) in tRNAs with GU(N) anticodons (tRNA-Asp, -Asn, -His and -Tyr). Catalysis occurs through a double-displacement mechanism. The nucleophile active site attacks the C1' of nucleotide 34 to detach the guanine base from the RNA, forming a covalent enzyme-RNA intermediate. The proton acceptor active site deprotonates the incoming PreQ1, allowing a nucleophilic attack on the C1' of the ribose to form the product. After dissociation, two additional enzymatic reactions on the tRNA convert PreQ1 to queuine (Q), resulting in the hypermodified nucleoside queuosine (7-(((4,5-cis-dihydroxy-2-cyclopenten-1-yl)amino)methyl)-7-deazaguanosine). In Campylobacter hominis (strain ATCC BAA-381 / DSM 21671 / CCUG 45161 / LMG 19568 / NCTC 13146 / CH001A), this protein is Queuine tRNA-ribosyltransferase.